The primary structure comprises 95 residues: Co-chaperonin GroES (95 aa).

Belongs to the GroES chaperonin family. In terms of assembly, heptamer of 7 subunits arranged in a ring. Interacts with the chaperonin GroEL.

It is found in the cytoplasm. Functionally, together with the chaperonin GroEL, plays an essential role in assisting protein folding. The GroEL-GroES system forms a nano-cage that allows encapsulation of the non-native substrate proteins and provides a physical environment optimized to promote and accelerate protein folding. GroES binds to the apical surface of the GroEL ring, thereby capping the opening of the GroEL channel. The chain is Co-chaperonin GroES from Rhizorhabdus wittichii (strain DSM 6014 / CCUG 31198 / JCM 15750 / NBRC 105917 / EY 4224 / RW1) (Sphingomonas wittichii).